Here is a 218-residue protein sequence, read N- to C-terminus: Adenylate kinase (218 aa).

10 to 15 contacts ATP; sequence GAGKGT. Positions 30 to 59 are NMP; it reads STGDMLRAAVKAQSELGMAAKKVMDEGGLV. Residues Thr-31, Arg-36, 57–59, 85–88, and Gln-92 contribute to the AMP site; these read GLV and GFPR. Positions 122–159 are LID; sequence GRRVHPASGRTYHIVFNPPAVEGKDDVTGEDLVQRDDD. ATP-binding positions include Arg-123 and 132–133; that span reads TY. Positions 156 and 167 each coordinate AMP. ATP is bound at residue Gly-203.

Belongs to the adenylate kinase family. As to quaternary structure, monomer.

The protein resides in the cytoplasm. It catalyses the reaction AMP + ATP = 2 ADP. The protein operates within purine metabolism; AMP biosynthesis via salvage pathway; AMP from ADP: step 1/1. Catalyzes the reversible transfer of the terminal phosphate group between ATP and AMP. Plays an important role in cellular energy homeostasis and in adenine nucleotide metabolism. The chain is Adenylate kinase from Chlorobaculum parvum (strain DSM 263 / NCIMB 8327) (Chlorobium vibrioforme subsp. thiosulfatophilum).